A 29-amino-acid chain; its full sequence is Trypsin inhibitor 2 (29 aa).

Intrachain disulfides connect cysteine 3-cysteine 20, cysteine 10-cysteine 22, and cysteine 16-cysteine 28.

The protein belongs to the protease inhibitor I7 (squash-type serine protease inhibitor) family.

The protein localises to the secreted. Functionally, inhibits trypsin. In Bryonia dioica (Red bryony), this protein is Trypsin inhibitor 2.